A 159-amino-acid polypeptide reads, in one-letter code: UPF0336 protein ML1910 (159 aa).

The protein belongs to the UPF0336 family.

This chain is UPF0336 protein ML1910, found in Mycobacterium leprae (strain TN).